A 222-amino-acid polypeptide reads, in one-letter code: Putative auxin response factor 23 (222 aa).

Residues 126–222 constitute a DNA-binding region (TF-B3); sequence FTKVLTASDT…ETGELRVGIR (97 aa).

Belongs to the ARF family. As to quaternary structure, homo and heterodimers.

The protein resides in the nucleus. Functionally, auxin response factors (ARFs) are transcriptional factors that binds specifically to the DNA sequence 5'-TGTCTC-3' found in the auxin-responsive promoter elements (AuxREs). Could act as transcriptional activator or repressor. Formation of heterodimers with Aux/IAA proteins may alter their ability to modulate early auxin response genes expression. The sequence is that of Putative auxin response factor 23 (ARF23) from Arabidopsis thaliana (Mouse-ear cress).